The sequence spans 914 residues: DNA mismatch repair protein MutS (914 aa).

A disordered region spans residues 28–74 (NTNSVKDSNLNDEELSKNAELRPRKRKKSVLLQNSVGEQTEDFSNDE). Residue 726 to 733 (GPNASGKS) participates in ATP binding.

Belongs to the DNA mismatch repair MutS family.

In terms of biological role, this protein is involved in the repair of mismatches in DNA. It is possible that it carries out the mismatch recognition step. This protein has a weak ATPase activity. In Prochlorococcus marinus (strain SARG / CCMP1375 / SS120), this protein is DNA mismatch repair protein MutS.